Reading from the N-terminus, the 406-residue chain is RILP-like protein 1 (406 aa).

Positions Gln5–Glu99 constitute an RH1 domain. Positions Asp105–Ala319 form a coiled coil. Disordered stretches follow at residues Glu234 to Glu272 and Ser323 to Pro351. Positions Glu241–Glu257 are enriched in basic and acidic residues. Positions Arg289 to Leu358 constitute an RH2 domain. A compositionally biased stretch (polar residues) spans Thr340–Pro351.

The protein belongs to the RILPL family.

It is found in the cytoplasm. The protein localises to the cytosol. The protein resides in the cytoskeleton. It localises to the microtubule organizing center. Its subcellular location is the centrosome. It is found in the cell projection. The protein localises to the cilium. Plays a role in the regulation of cell shape and polarity. Plays a role in cellular protein transport, including protein transport away from primary cilia. Neuroprotective protein. This chain is RILP-like protein 1 (rilpl1), found in Danio rerio (Zebrafish).